A 1018-amino-acid polypeptide reads, in one-letter code: MDLIRGVLLRLLLLASSLGPGAAPLRSALRKQGKVGPPLDIILDALNCSAFSIQWKMPRHPPSPIMGYTVFYSEVGIDKSLQERSYGVPPGLDTPTSGRLDHQMIFEEVIGDLKPGTEYRVSMAAYSQTGKGRLSSPQHVTTLPQDSCLPPTAPQQPHVIVVSDSEVALSWKPGESEGSSPIQYYSVEFTRPDFDKSWTSIREQIQMDSMVIKGLDPDTNYQFAVRAVNPHGSSPRSQPSSTIRTARPEESGSGRYGPHYATDTEAGEDDDTFEDDLDLDISFEEVKPLPAIKEGNKKFFVESKMAPRPNPMTVSRLVPPTPASLPTTAVAPQPTPVDRKGKHGVAVMPRLFDTSCDETVCSADSFCVSDYTWGGSRCHCNLGKGGESCSEDIVIQYPQFFGHSYVTFEPLKNSYQAFQITLEFRAEAEDGLLLYCGENEHGRGDFMSLAVIRRSLQFRFNCGTGVAIIVSETKIKLGGWHTVTLYRDGLNGLLQLNNGTPVTGQSQGQYSKITFRTPLYLGGAPSAYWLVRATGTNRGFQGCVQALTVNGKRLDLRPWPLGKALSGADVGECSSGICDEASCINGGTCMASKADSYICLCPLGFRGRHCEDAFTLTIPQFKESLRSYAATPWPLEPRHYLSFMEFEVTFRPDSEDGVLLYSYDTGSKDFLSINMAGGHVEFRFDCGSGTGVLRSEEPLTLGHWHELCVSRTAKNGILQVDKQKAVEGMAEGGFTQIKCNSDIFIGGVPNYDDVKKNSGILKPFSGSIQKIILNDRTIHVKHDFTWGVNVENAAHPCVGSPCAHGGSCRPRKEGYECDCPLGFEGLHCQKAITEAIEIPQFIGRSYLTYDNPDILKRVSGSRSNAFMRFKTTAKDGLLLWRGDSPMRPNSDFISLGLRDGALVFSYNLGSGVASIMVNGSFNDGRWHRVKAVRDGQSGKITVDDYGARTGKSPGMMRQLNINGALYVGGMKEIALHTNRQYMRGLVGCISHFTLSTDYHISLVEDAVDGKNINTCGAK.

A signal peptide spans 1–23; the sequence is MDLIRGVLLRLLLLASSLGPGAA. 2 Fibronectin type-III domains span residues 37–145 and 153–248; these read PPLD…TLPQ and APQQ…TARP. A glycan (N-linked (GlcNAc...) asparagine) is linked at Asn-47. The interval 228–274 is disordered; sequence VNPHGSSPRSQPSSTIRTARPEESGSGRYGPHYATDTEAGEDDDTFE. The span at 231–244 shows a compositional bias: polar residues; sequence HGSSPRSQPSSTIR. Over residues 265–274 the composition is skewed to acidic residues; that stretch reads EAGEDDDTFE. In terms of domain architecture, EGF-like 1 spans 352 to 390; sequence FDTSCDETVCSADSFCVSDYTWGGSRCHCNLGKGGESCS. 11 disulfide bridges follow: Cys-356/Cys-367, Cys-361/Cys-378, Cys-380/Cys-389, Cys-543/Cys-573, Cys-578/Cys-589, Cys-583/Cys-599, Cys-601/Cys-610, Cys-797/Cys-808, Cys-802/Cys-817, Cys-819/Cys-828, and Cys-988/Cys-1015. The Laminin G-like 1 domain maps to 395-573; it reads IQYPQFFGHS…ALSGADVGEC (179 aa). EGF-like domains are found at residues 574–611 and 793–829; these read SSGICDEASCINGGTCMASKADSYICLCPLGFRGRHCE and AAHPCVGSPCAHGGSCRPRKEGYECDCPLGFEGLHCQ. Positions 618-797 constitute a Laminin G-like 2 domain; that stretch reads IPQFKESLRS…VNVENAAHPC (180 aa). Positions 836–1015 constitute a Laminin G-like 3 domain; that stretch reads IEIPQFIGRS…AVDGKNINTC (180 aa).

As to quaternary structure, interacts with DAG1 alpha-dystroglycan. Interacts with GPR158 and GPR179; transsynaptic interaction is required for synaptic organization of photoreceptor cells. In terms of processing, O-glycosylated; contains chondroitin sulfate and heparan sulfate.

The protein localises to the secreted. Its subcellular location is the extracellular space. It localises to the extracellular matrix. The protein resides in the synaptic cleft. It is found in the presynaptic active zone. In terms of biological role, involved in both the retinal photoreceptor ribbon synapse formation and physiological functions of visual perception. Plays a key role in the synaptic organization of photoreceptors by mediating transsynaptic interaction between alpha-dystroglycan and GPR179 on the postsynaptic membrane. Necessary for proper bipolar dendritic tip apposition to the photoreceptor ribbon synapse. Promotes matrix assembly and cell adhesiveness. The chain is Pikachurin (EGFLAM) from Bos taurus (Bovine).